A 267-amino-acid chain; its full sequence is Phosphate import ATP-binding protein PstB (267 aa).

Residues 21 to 262 (IAIRNLEFYY…PSKQQTEDYI (242 aa)) enclose the ABC transporter domain. 53-60 (GPSGCGKS) contacts ATP.

Belongs to the ABC transporter superfamily. Phosphate importer (TC 3.A.1.7) family. The complex is composed of two ATP-binding proteins (PstB), two transmembrane proteins (PstC and PstA) and a solute-binding protein (PstS).

It is found in the cell inner membrane. The enzyme catalyses phosphate(out) + ATP + H2O = ADP + 2 phosphate(in) + H(+). Its function is as follows. Part of the ABC transporter complex PstSACB involved in phosphate import. Responsible for energy coupling to the transport system. This is Phosphate import ATP-binding protein PstB from Xylella fastidiosa (strain 9a5c).